Here is a 100-residue protein sequence, read N- to C-terminus: A-type ATP synthase subunit F (100 aa).

The protein belongs to the V-ATPase F subunit family. Has multiple subunits with at least A(3), B(3), C, D, E, F, H, I and proteolipid K(x).

It localises to the cell membrane. Functionally, component of the A-type ATP synthase that produces ATP from ADP in the presence of a proton gradient across the membrane. The polypeptide is A-type ATP synthase subunit F (Methanocorpusculum labreanum (strain ATCC 43576 / DSM 4855 / Z)).